We begin with the raw amino-acid sequence, 475 residues long: Aspartyl/glutamyl-tRNA(Asn/Gln) amidotransferase subunit B (475 aa).

Belongs to the GatB/GatE family. GatB subfamily. As to quaternary structure, heterotrimer of A, B and C subunits.

It carries out the reaction L-glutamyl-tRNA(Gln) + L-glutamine + ATP + H2O = L-glutaminyl-tRNA(Gln) + L-glutamate + ADP + phosphate + H(+). The enzyme catalyses L-aspartyl-tRNA(Asn) + L-glutamine + ATP + H2O = L-asparaginyl-tRNA(Asn) + L-glutamate + ADP + phosphate + 2 H(+). In terms of biological role, allows the formation of correctly charged Asn-tRNA(Asn) or Gln-tRNA(Gln) through the transamidation of misacylated Asp-tRNA(Asn) or Glu-tRNA(Gln) in organisms which lack either or both of asparaginyl-tRNA or glutaminyl-tRNA synthetases. The reaction takes place in the presence of glutamine and ATP through an activated phospho-Asp-tRNA(Asn) or phospho-Glu-tRNA(Gln). This chain is Aspartyl/glutamyl-tRNA(Asn/Gln) amidotransferase subunit B, found in Agathobacter rectalis (strain ATCC 33656 / DSM 3377 / JCM 17463 / KCTC 5835 / VPI 0990) (Eubacterium rectale).